A 395-amino-acid polypeptide reads, in one-letter code: Sulfate adenylyltransferase (395 aa).

This sequence belongs to the sulfate adenylyltransferase family.

It carries out the reaction sulfate + ATP + H(+) = adenosine 5'-phosphosulfate + diphosphate. It functions in the pathway sulfur metabolism; hydrogen sulfide biosynthesis; sulfite from sulfate: step 1/3. The protein is Sulfate adenylyltransferase of Synechococcus elongatus (strain ATCC 33912 / PCC 7942 / FACHB-805) (Anacystis nidulans R2).